The following is a 109-amino-acid chain: Phycoerythrin alpha-1 subunit (109 aa).

(2R,3E)-phycocyanobilin contacts are provided by Val-6, Ala-16, Phe-17, Pro-20, Asp-27, Ala-28, and Ala-39.

The protein belongs to the phycoerythrin family. In terms of assembly, heterotetramer of 2 identical alpha chains and 2 identical beta chains which form 2 alpha-beta heterodimers within the heterotetramer. The two alpha-beta heterodimers are rotated to an open configuration in contrast to the closed configuration found in other cryptophyte species due to the insertion of a single amino acid, Asp-65, in a conserved region of the alpha chain. In the open form, the central chromophores are not in physical contact but are separated by a water-filled channel. Post-translationally, contains three phycocyanobilin chromophores with binding mediated by both the alpha and beta subunits.

Its subcellular location is the plastid. It localises to the chloroplast thylakoid membrane. Functionally, light-harvesting photosynthetic tetrapyrrole chromophore-protein from the phycobiliprotein complex. The protein is Phycoerythrin alpha-1 subunit of Hemiselmis virescens.